A 462-amino-acid chain; its full sequence is Serine carboxypeptidase-like 28 (462 aa).

Positions 1–26 (MMITKKLYQCMCLLCMVIALLDVVSS) are cleaved as a signal peptide. Asparagine 49 and asparagine 144 each carry an N-linked (GlcNAc...) asparagine glycan. 3 cysteine pairs are disulfide-bonded: cysteine 93/cysteine 342, cysteine 254/cysteine 266, and cysteine 290/cysteine 311. Serine 186 is an active-site residue. An N-linked (GlcNAc...) asparagine glycan is attached at asparagine 256. A glycan (N-linked (GlcNAc...) asparagine) is linked at asparagine 334. Active-site residues include aspartate 379 and histidine 434. Residue asparagine 454 is glycosylated (N-linked (GlcNAc...) asparagine).

Belongs to the peptidase S10 family. As to expression, expressed in seedlings, roots and senescent leaves.

It is found in the secreted. Functionally, probable carboxypeptidase. This chain is Serine carboxypeptidase-like 28 (SCPL28), found in Arabidopsis thaliana (Mouse-ear cress).